A 638-amino-acid polypeptide reads, in one-letter code: 1-deoxy-D-xylulose-5-phosphate synthase (638 aa).

Thiamine diphosphate contacts are provided by residues histidine 77 and 118–120; that span reads AHA. Position 149 (aspartate 149) interacts with Mg(2+). Thiamine diphosphate contacts are provided by residues 150–151, asparagine 178, tyrosine 287, and glutamate 369; that span reads GS. Asparagine 178 lines the Mg(2+) pocket.

Belongs to the transketolase family. DXPS subfamily. Homodimer. The cofactor is Mg(2+). Requires thiamine diphosphate as cofactor.

It carries out the reaction D-glyceraldehyde 3-phosphate + pyruvate + H(+) = 1-deoxy-D-xylulose 5-phosphate + CO2. The protein operates within metabolic intermediate biosynthesis; 1-deoxy-D-xylulose 5-phosphate biosynthesis; 1-deoxy-D-xylulose 5-phosphate from D-glyceraldehyde 3-phosphate and pyruvate: step 1/1. Its function is as follows. Catalyzes the acyloin condensation reaction between C atoms 2 and 3 of pyruvate and glyceraldehyde 3-phosphate to yield 1-deoxy-D-xylulose-5-phosphate (DXP). This chain is 1-deoxy-D-xylulose-5-phosphate synthase, found in Phenylobacterium zucineum (strain HLK1).